A 328-amino-acid chain; its full sequence is ABC transporter I family member 20 (328 aa).

Residues 14-257 (VEISGLRFTY…SKKSLMRTVE (244 aa)) enclose the ABC transporter domain. 55 to 62 (GSNGAGKT) contributes to the ATP binding site. A disordered region spans residues 263 to 295 (ERDEERKRRKERKANGLPEFETRTEESRVTGDP). Basic and acidic residues predominate over residues 282-291 (FETRTEESRV).

Belongs to the ABC transporter superfamily. ABCI family.

Its subcellular location is the cytoplasm. The chain is ABC transporter I family member 20 (ABCI20) from Arabidopsis thaliana (Mouse-ear cress).